The primary structure comprises 168 residues: GTP-dependent dephospho-CoA kinase (168 aa).

GTP is bound by residues aspartate 49, valine 50, valine 51, aspartate 68, lysine 70, and glutamate 120.

It belongs to the GTP-dependent DPCK family.

It carries out the reaction 3'-dephospho-CoA + GTP = GDP + CoA + H(+). It functions in the pathway cofactor biosynthesis; coenzyme A biosynthesis. Functionally, catalyzes the GTP-dependent phosphorylation of the 3'-hydroxyl group of dephosphocoenzyme A to form coenzyme A (CoA). This Pyrobaculum calidifontis (strain DSM 21063 / JCM 11548 / VA1) protein is GTP-dependent dephospho-CoA kinase.